The sequence spans 614 residues: NEDD8 ultimate buster 1 (614 aa).

Coiled coils occupy residues 36–71 (LAVK…IERG) and 151–206 (NVKA…MVVD). UBA domains lie at 373-413 (YIDP…ISNR), 423-469 (EEKE…LLSN), and 488-528 (SPSQ…LAHH). Positions 413–430 (RREELAQIRKEEKEKRRR) match the Nuclear localization signal motif. The interval 426–473 (EKRRRRLENVNTLRGMGYSTQAAKQALHQARGNLDDALKVLLSNPHMW) is NEDD8-binding 1. The interval 531 to 590 (SLPPDLQFSGEDSSPTPSTSPSDSAGTSSASTDEDMETEAVNEILEDIPEHEEDYLDSTL) is disordered. The span at 539 to 561 (SGEDSSPTPSTSPSDSAGTSSAS) shows a compositional bias: low complexity. Residues 549–597 (TSPSDSAGTSSASTDEDMETEAVNEILEDIPEHEEDYLDSTLEDEEVII) are NEDD8-binding 2. The segment covering 562-590 (TDEDMETEAVNEILEDIPEHEEDYLDSTL) has biased composition (acidic residues).

In terms of assembly, directly interacts with NEDD8 and PSMD4/S5a, a member of the regulatory subunit of the 26S proteasome. Interacts with AIPL1. The interaction with UBD via UBA domains facilitates the linking of UBD-conjugated target protein to the proteasome complex and accelerates UBD degradation and that of its conjugates.

It localises to the nucleus. Specific down-regulator of the NEDD8 conjugation system. Recruits NEDD8, UBD, and their conjugates to the proteasome for degradation. This Mus musculus (Mouse) protein is NEDD8 ultimate buster 1 (Nub1).